The following is a 208-amino-acid chain: Guanylate kinase (208 aa).

The Guanylate kinase-like domain maps to 21-201; sequence GRVVVLSGPS…ACAELVSLLV (181 aa). ATP is bound at residue 28–35; sequence GPSAVGKS.

Belongs to the guanylate kinase family.

Its subcellular location is the cytoplasm. It carries out the reaction GMP + ATP = GDP + ADP. Functionally, essential for recycling GMP and indirectly, cGMP. The sequence is that of Guanylate kinase (gmk) from Mycobacterium bovis (strain ATCC BAA-935 / AF2122/97).